Consider the following 131-residue polypeptide: Holo-[acyl-carrier-protein] synthase (131 aa).

The Mg(2+) site is built by Asp-8 and Glu-59.

The protein belongs to the P-Pant transferase superfamily. AcpS family. Mg(2+) serves as cofactor.

It localises to the cytoplasm. The enzyme catalyses apo-[ACP] + CoA = holo-[ACP] + adenosine 3',5'-bisphosphate + H(+). In terms of biological role, transfers the 4'-phosphopantetheine moiety from coenzyme A to a Ser of acyl-carrier-protein. In Rickettsia felis (strain ATCC VR-1525 / URRWXCal2) (Rickettsia azadi), this protein is Holo-[acyl-carrier-protein] synthase.